A 69-amino-acid chain; its full sequence is DNA gyrase inhibitor YacG (69 aa).

Zn(2+) is bound by residues cysteine 13, cysteine 16, cysteine 32, and cysteine 36.

It belongs to the DNA gyrase inhibitor YacG family. In terms of assembly, interacts with GyrB. Requires Zn(2+) as cofactor.

Functionally, inhibits all the catalytic activities of DNA gyrase by preventing its interaction with DNA. Acts by binding directly to the C-terminal domain of GyrB, which probably disrupts DNA binding by the gyrase. This is DNA gyrase inhibitor YacG from Neisseria meningitidis serogroup B (strain ATCC BAA-335 / MC58).